Here is a 945-residue protein sequence, read N- to C-terminus: Glutamyl aminopeptidase (945 aa).

At 1–18 (MNFAEEEPSKKYCIKGKH) the chain is on the cytoplasmic side. A helical; Signal-anchor for type II membrane protein transmembrane segment spans residues 19–39 (VAIICATVVAVGLIVGLSVGL). Over 40–945 (TRSCEPGTTP…SISEWFTSMP (906 aa)) the chain is Extracellular. Positions 45 to 77 (PGTTPAPSNPPPHTSTALPPQDQNVCPDSDDES) are disordered. Residues Asn116 and Asn189 are each glycosylated (N-linked (GlcNAc...) asparagine). Residue Glu215 participates in substrate binding. Residues Asn236 and Asn316 are each glycosylated (N-linked (GlcNAc...) asparagine). Position 349–353 (349–353 (GAMEN)) interacts with substrate. His385 contacts Zn(2+). Glu386 serves as the catalytic Proton acceptor. Residues His389 and Glu408 each contribute to the Zn(2+) site. Asn546, Asn584, Asn601, Asn640, Asn669, Asn754, Asn766, and Asn792 each carry an N-linked (GlcNAc...) asparagine glycan. Residue Arg878 coordinates substrate.

It belongs to the peptidase M1 family. In terms of assembly, homodimer; disulfide-linked. Zn(2+) serves as cofactor. As to expression, highest expression in kidney proximal tubules and ileum enterocytes. High expression also detected in liver and pituitary. Lower levels in heart, adrenal gland and brain. Not detected in aorta, lung or spleen. In heart, higher levels in ventricle than in atrium. Also expressed in glomerular mesangial cells.

It localises to the cell membrane. It catalyses the reaction Release of N-terminal glutamate (and to a lesser extent aspartate) from a peptide.. Substrate specificity is modulated by calcium which enhances the enzymatic activity for cleavage of acidic residues while reducing its activity with basic residues. Inhibited by aminopeptidase inhibitors amastatin and bestatin. Its function is as follows. Regulates central hypertension through its calcium-modulated preference to cleave N-terminal acidic residues from peptides such as angiotensin II. The polypeptide is Glutamyl aminopeptidase (Enpep) (Rattus norvegicus (Rat)).